Consider the following 406-residue polypeptide: Putative odorant receptor 65b (406 aa).

Over 1–55 (MDIQRFLKFYKVGWKTYRDPLMEASHSSIYYWREQMKAMALFTTTEERLLPYRSK) the chain is Cytoplasmic. Residues 56-76 (WHTLVYIQMVIFFASMSFGLT) traverse the membrane as a helical segment. Residues 77–88 (ESMGDHVQMGRD) are Extracellular-facing. A helical transmembrane segment spans residues 89-109 (LAFILGAFFIIFKTYYFCWYG). At 110 to 144 (DELDQVISDLDALHPWAQKGPNPVEYQTGKRWYFV) the chain is on the cytoplasmic side. Residues 145–165 (MAFFLATSWSFFLCILLLLLI) traverse the membrane as a helical segment. Residues 166–218 (TSPMWVHQQNLPFHAAFPFQWHEKSLHPISHAIIYLFQSYFAVYCLTWLLCIE) lie on the Extracellular side of the membrane. A helical membrane pass occupies residues 219–239 (GLSICIYAEITFGIEVLCLEL). The Cytoplasmic segment spans residues 240-275 (RQIHRHNYGLQELRMETNRLVKLHQKIVEILDRTND). Residues 276-296 (VFHGTLIMQMGVNFSLVSLSV) form a helical membrane-spanning segment. Topologically, residues 297 to 307 (LEAVEARKDPK) are extracellular. Residues 308 to 328 (VVAQFAVLMLLALGHLSMWSY) form a helical membrane-spanning segment. Topologically, residues 329-381 (CGDQLSQKSLQISEAAYEAYDPTKGSKDVYRDLCVIIRRGQDPLIMRASPFPS) are cytoplasmic. A helical transmembrane segment spans residues 382–402 (FNLINYSAILNQCYGILTFLL). The Extracellular segment spans residues 403–406 (KTLD).

Belongs to the insect chemoreceptor superfamily. Heteromeric odorant receptor channel (TC 1.A.69) family. Or49a subfamily. As to quaternary structure, interacts with Orco. Complexes exist early in the endomembrane system in olfactory sensory neurons (OSNs), coupling these complexes to the conserved ciliary trafficking pathway.

It localises to the cell membrane. In terms of biological role, odorant receptor which mediates acceptance or avoidance behavior, depending on its substrates. The odorant receptor repertoire encodes a large collection of odor stimuli that vary widely in identity, intensity, and duration. May form a complex with Orco to form odorant-sensing units, providing sensitive and prolonged odorant signaling and calcium permeability. In Drosophila melanogaster (Fruit fly), this protein is Putative odorant receptor 65b (Or65b).